The chain runs to 310 residues: p-hydroxybenzoic acid efflux pump subunit AaeA (310 aa).

The helical transmembrane segment at 12 to 32 (AITVVLVILAFIAIFNAWVYY) threads the bilayer.

Belongs to the membrane fusion protein (MFP) (TC 8.A.1) family.

It is found in the cell inner membrane. In terms of biological role, forms an efflux pump with AaeB. This chain is p-hydroxybenzoic acid efflux pump subunit AaeA, found in Escherichia coli O127:H6 (strain E2348/69 / EPEC).